The following is a 138-amino-acid chain: Acidic phospholipase A2 CoaPLA2 (138 aa).

Residues 1–16 (MRTLWIVAVLLLGVEG) form the signal peptide. 7 cysteine pairs are disulfide-bonded: Cys-42/Cys-131, Cys-44/Cys-60, Cys-59/Cys-111, Cys-65/Cys-138, Cys-66/Cys-104, Cys-73/Cys-97, and Cys-91/Cys-102. Ca(2+) contacts are provided by Tyr-43, Gly-45, and Gly-47. The active site involves His-63. Asp-64 lines the Ca(2+) pocket. Residue Asp-105 is part of the active site.

Belongs to the phospholipase A2 family. Group II subfamily. D49 sub-subfamily. Homodimer. Ca(2+) serves as cofactor. As to expression, expressed by the venom gland.

It localises to the secreted. The enzyme catalyses a 1,2-diacyl-sn-glycero-3-phosphocholine + H2O = a 1-acyl-sn-glycero-3-phosphocholine + a fatty acid + H(+). Functionally, snake venom phospholipase A2 (PLA2) that shows very low inhibition of ADP-induced platelet aggregation in platelet-rich plasma of human, rabbit and guinea pig. Shows edema-inducing activity and myotoxicity. PLA2 catalyzes the calcium-dependent hydrolysis of the 2-acyl groups in 3-sn-phosphoglycerides. The protein is Acidic phospholipase A2 CoaPLA2 of Crotalus lutosus abyssus (Grand Canyon rattlesnake).